A 276-amino-acid chain; its full sequence is Rhomboid protease GlpG (276 aa).

6 consecutive transmembrane segments (helical) span residues 96 to 116, 142 to 162, 169 to 189, 192 to 212, 229 to 249, and 250 to 270; these read VTWL…IVGA, AFMH…WYIG, LGSG…GYVQ, FSGP…GYAW, LIAF…GMSM, and ANGA…ADTV. The active-site Nucleophile is S201. Residue H254 is part of the active site.

Belongs to the peptidase S54 family.

It localises to the cell inner membrane. It catalyses the reaction Cleaves type-1 transmembrane domains using a catalytic dyad composed of serine and histidine that are contributed by different transmembrane domains.. Functionally, rhomboid-type serine protease that catalyzes intramembrane proteolysis. The protein is Rhomboid protease GlpG of Citrobacter koseri (strain ATCC BAA-895 / CDC 4225-83 / SGSC4696).